Here is a 245-residue protein sequence, read N- to C-terminus: MDENHRNPFANASTSARASGSTSASSNSSFSSSVADTDDDQTIARILAEDESLRREGKLGKRLSHLDSIPHTPRVNREIPDINDATLDHELLSGRLATYGLAELQMEGDGNCQFRALADQLFRNADYHKHVRKHVVKQLKQQRKLYEEYVPMKYRHYTRKMKKHGEWGDHVTLQAAADRFEAKICLVTSFRDQSYIEILPHNKNPLREAWLSFWSEVHYNSLYANGVLALPDVPTRKPRRKHWLF.

Positions 1-37 (MDENHRNPFANASTSARASGSTSASSNSSFSSSVADT) are disordered. Low complexity predominate over residues 10–35 (ANASTSARASGSTSASSNSSFSSSVA). Residues 101–225 (LAELQMEGDG…EVHYNSLYAN (125 aa)) form the OTU domain. The active site involves Asp109. Residue Cys112 is the Nucleophile of the active site. His218 is an active-site residue.

Belongs to the peptidase C85 family.

It carries out the reaction Thiol-dependent hydrolysis of ester, thioester, amide, peptide and isopeptide bonds formed by the C-terminal Gly of ubiquitin (a 76-residue protein attached to proteins as an intracellular targeting signal).. Functionally, hydrolase that can remove conjugated ubiquitin from proteins in vitro and may therefore play an important regulatory role at the level of protein turnover by preventing degradation. Inactive cysteine protease. This is OVARIAN TUMOR DOMAIN-containing deubiquitinating enzyme 11 from Arabidopsis thaliana (Mouse-ear cress).